The sequence spans 470 residues: Nuclear receptor subfamily 0 group B member 1 (470 aa).

3 tandem repeats follow at residues 1–67, 68–133, and 134–200. A 4 X 67 AA tandem repeats region spans residues 1–253; that stretch reads MAGENHQWQG…RPVALKNPQV (253 aa). 3 consecutive short sequence motifs (LXXLL motif) follow at residues 13–17, 80–84, and 146–150; these read LYNML, LYSML, and LYSLL. Residues 201-253 form a 4; truncated repeat; it reads FCGEDHPQQGSTLYCMPTSTNQAQAAPEERPRAPWWDTSSGALRPVALKNPQV. Positions 205-469 constitute an NR LBD domain; sequence DHPQQGSTLY…DMMLEMLCTK (265 aa). Residues 461–466 carry the AF-2 motif motif; sequence MMLEML.

This sequence belongs to the nuclear hormone receptor family. NR0 subfamily. Homodimer. Interacts with NR5A1, NR5A2, NR0B2 and with COPS2. Interacts with ESRRB; represses ESRRB activity at the GATA6 promoter.

The protein localises to the nucleus. It is found in the cytoplasm. Nuclear receptor that lacks a DNA-binding domain and acts as a corepressor that inhibits the transcriptional activity of other nuclear receptors through heterodimeric interactions. Component of a cascade required for the development of the hypothalamic-pituitary-adrenal-gonadal axis. May also have a role in the development of the embryo and in the maintenance of embryonic stem cell pluripotency. The protein is Nuclear receptor subfamily 0 group B member 1 (NR0B1) of Macaca mulatta (Rhesus macaque).